A 77-amino-acid chain; its full sequence is Large ribosomal subunit protein bL31 (77 aa).

The protein belongs to the bacterial ribosomal protein bL31 family. Type A subfamily. As to quaternary structure, part of the 50S ribosomal subunit.

Its function is as follows. Binds the 23S rRNA. This Paramagnetospirillum magneticum (strain ATCC 700264 / AMB-1) (Magnetospirillum magneticum) protein is Large ribosomal subunit protein bL31.